A 335-amino-acid chain; its full sequence is Protein-lysine N-methyltransferase EEF2KMT (335 aa).

M1 bears the N-acetylmethionine mark. Residues W139, 165–167 (GSG), W228, and A247 contribute to the S-adenosyl-L-methionine site.

The protein belongs to the class I-like SAM-binding methyltransferase superfamily. EEF2KMT family. As to quaternary structure, interacts with FAM86B2 and FAM86C1P.

Its subcellular location is the cytoplasm. The enzyme catalyses L-lysyl-[protein] + 3 S-adenosyl-L-methionine = N(6),N(6),N(6)-trimethyl-L-lysyl-[protein] + 3 S-adenosyl-L-homocysteine + 3 H(+). In terms of biological role, catalyzes the trimethylation of eukaryotic elongation factor 2 (EEF2) on 'Lys-525'. The chain is Protein-lysine N-methyltransferase EEF2KMT (Eef2kmt) from Mus musculus (Mouse).